Consider the following 402-residue polypeptide: Alkaline proteinase (402 aa).

An N-terminal signal peptide occupies residues 1 to 20 (MVTLRRLAVLLGAIPAALAA). Positions 21 to 120 (PTTQKREVVP…EQDEGEFSTA (100 aa)) are excised as a propeptide. Residues 32–108 (KYIVTLKEGA…EVEEDQIWHL (77 aa)) enclose the Inhibitor I9 domain. The Peptidase S8 domain maps to 128–402 (AWGLGTISHR…NRILYNGNGA (275 aa)). Residues Asp-160, His-191, and Ser-347 each act as charge relay system in the active site. Residues 382 to 392 (GRVSNPGSGSP) show a composition bias toward polar residues. Residues 382 to 402 (GRVSNPGSGSPNRILYNGNGA) are disordered.

This sequence belongs to the peptidase S8 family.

The sequence is that of Alkaline proteinase (ALP) from Hapsidospora chrysogena (Acremonium chrysogenum).